The primary structure comprises 433 residues: ATP-dependent protease ATPase subunit HslU (433 aa).

ATP contacts are provided by residues Ile-18, 60–65, Asp-246, Glu-311, and Arg-383; that span reads GVGKTE.

This sequence belongs to the ClpX chaperone family. HslU subfamily. A double ring-shaped homohexamer of HslV is capped on each side by a ring-shaped HslU homohexamer. The assembly of the HslU/HslV complex is dependent on binding of ATP.

Its subcellular location is the cytoplasm. In terms of biological role, ATPase subunit of a proteasome-like degradation complex; this subunit has chaperone activity. The binding of ATP and its subsequent hydrolysis by HslU are essential for unfolding of protein substrates subsequently hydrolyzed by HslV. HslU recognizes the N-terminal part of its protein substrates and unfolds these before they are guided to HslV for hydrolysis. In Cereibacter sphaeroides (strain ATCC 17029 / ATH 2.4.9) (Rhodobacter sphaeroides), this protein is ATP-dependent protease ATPase subunit HslU.